The chain runs to 100 residues: RxLR effector protein SFI8 (100 aa).

The first 22 residues, 1-22 (MRSILYAVLAFAVLARSSAVAA), serve as a signal peptide directing secretion. The RxLR-dEER signature appears at 43–57 (RSLRVEAQEVIQSGR). The short motif at 78-82 (KPDIK) is the Calmodulin-binding motif element.

The protein belongs to the RxLR effector family. In terms of assembly, interacts with the host calmodulin.

Its subcellular location is the secreted. It is found in the host nucleus. The protein resides in the host cytoplasm. Functionally, effector that suppresses flg22-induced post-translational MAP kinase activation both tomato and Arabidopsis. The perception of highly conserved pathogen- or microbe-associated molecular patterns (PAMPs/MAMPs), such as flg22, triggers converging signaling pathways recruiting MAP kinase cascades and inducing transcriptional re-programming, yielding a generic antimicrobial response. Associates with calmodulin to interfere with plant defense-associated calcium signaling in hosts. This Phytophthora infestans (strain T30-4) (Potato late blight agent) protein is RxLR effector protein SFI8.